The chain runs to 368 residues: Alanine racemase (368 aa).

Residue Lys40 is the Proton acceptor; specific for D-alanine of the active site. Position 40 is an N6-(pyridoxal phosphate)lysine (Lys40). Residue Arg134 participates in substrate binding. Tyr263 acts as the Proton acceptor; specific for L-alanine in catalysis. Met310 provides a ligand contact to substrate.

This sequence belongs to the alanine racemase family. Pyridoxal 5'-phosphate is required as a cofactor.

It carries out the reaction L-alanine = D-alanine. Its pathway is amino-acid biosynthesis; D-alanine biosynthesis; D-alanine from L-alanine: step 1/1. In terms of biological role, catalyzes the interconversion of L-alanine and D-alanine. May also act on other amino acids. This Listeria monocytogenes serotype 4b (strain F2365) protein is Alanine racemase (alr).